The following is a 76-amino-acid chain: DNA-directed RNA polymerase subunit epsilon (76 aa).

The protein belongs to the RNA polymerase subunit epsilon family. RNAP is composed of a core of 2 alpha, a beta and a beta' subunit. The core is associated with a delta subunit, and at least one of epsilon or omega. When a sigma factor is associated with the core the holoenzyme is formed, which can initiate transcription.

The enzyme catalyses RNA(n) + a ribonucleoside 5'-triphosphate = RNA(n+1) + diphosphate. In terms of biological role, a non-essential component of RNA polymerase (RNAP). The sequence is that of DNA-directed RNA polymerase subunit epsilon from Streptococcus mutans serotype c (strain ATCC 700610 / UA159).